Reading from the N-terminus, the 986-residue chain is Probable serine/threonine-protein kinase DDB_G0272092 (986 aa).

Residues 1-107 enclose the C2 domain; that stretch reads MARKIGSVRI…EYIVDTTKWY (107 aa). Positions 22, 28, 76, 78, 81, and 84 each coordinate Ca(2+). ANK repeat units lie at residues 137–167, 171–201, 205–238, 242–274, 278–307, and 312–344; these read PEKSPFIKAIKDNDTQAIELMMNKAKLDYTI, EGTPAIHIAAASNNIPLITMLLKGSDARVSI, HGNTPLHLFVQKNVSLNCEDIINKLIERGCGIND, LGETALHKACLATVVQKTTIVEQLLQKGAIINH, TRDTPLHYAIKVGKVEFVRFFLQNGANVMI, and PSRTPLELAKELGNPQIISKVEKVIEISDWLNE. Residues 333-396 enclose the SAM domain; the sequence is EKVIEISDWL…LRAVRKIKDP (64 aa). The segment covering 412-438 has biased composition (low complexity); the sequence is HVENDNNNNNNNNNNNNNSQEQCNINN. 2 disordered regions span residues 412 to 520 and 532 to 574; these read HVEN…SNTT and TTLT…PEGP. The segment covering 439 to 448 has biased composition (polar residues); that stretch reads DSLGSGNRNS. Over residues 454 to 464 the composition is skewed to low complexity; sequence QNQNNTLNNNN. Over residues 465 to 476 the composition is skewed to polar residues; it reads VESKSTGNLNSL. Composition is skewed to low complexity over residues 493–520 and 546–571; these read NILSPNPIPASSSAPAAPSPVAIGSNTT and TESTTPPQQQQQTTTITPTKTTTVTP. Positions 601-870 constitute a Protein kinase domain; sequence LTYNVLLGTG…ELLKIRDEYN (270 aa). Residues 607–615 and Lys628 each bind ATP; that span reads LGTGASGKV. Catalysis depends on Asp722, which acts as the Proton acceptor. Composition is skewed to low complexity over residues 901-913 and 928-947; these read DSNNINNNNNNNN and SNSNLLNNNNNNNNNDSDNN. Residues 901–986 form a disordered region; it reads DSNNINNNNN…SPMEPKSIKK (86 aa). 2 stretches are compositionally biased toward polar residues: residues 948–959 and 969–978; these read ISEPATTDSITK and LTRTRSSSSP.

Belongs to the protein kinase superfamily. TKL Ser/Thr protein kinase family. Ca(2+) is required as a cofactor.

The enzyme catalyses L-seryl-[protein] + ATP = O-phospho-L-seryl-[protein] + ADP + H(+). The catalysed reaction is L-threonyl-[protein] + ATP = O-phospho-L-threonyl-[protein] + ADP + H(+). This chain is Probable serine/threonine-protein kinase DDB_G0272092, found in Dictyostelium discoideum (Social amoeba).